The primary structure comprises 670 residues: Protein ACCELERATED CELL DEATH 6 (670 aa).

Residues 1–456 (MDSSGADLDR…PNYIFHERWT (456 aa)) are Cytoplasmic-facing. The disordered stretch occupies residues 18–47 (LVSHDQRKDFSHSGGVGTTSPTGDTEPVPK). ANK repeat units lie at residues 66–95 (EMTP…PMER), 100–129 (TGDS…CLLF), 134–163 (SRQT…SALA), 182–211 (DGNT…DAPF), 216–248 (KGIS…NVDR), 260–290 (QGNK…SLMD), 295–325 (DGRT…GVYV), 329–358 (DGSF…ASKY), 363–391 (LGQN…DTKH), and 399–428 (DGNT…EILK). A helical membrane pass occupies residues 457-477 (LALLLYAIHSSGFESVKSLTI). Topologically, residues 478-492 (QSVPLDPKKNRHYVN) are extracellular. The chain crosses the membrane as a helical span at residues 493–513 (ALLVVAALVATVTFAAGFTIP). Topologically, residues 514–537 (GGYISDSKKPNLGRATLATNPTLF) are cytoplasmic. Residues 538-558 (IFLLFDILAMQSSVATICTLI) traverse the membrane as a helical segment. Topologically, residues 559 to 577 (WAQLGDLALILKSLHVALP) are extracellular. The helical transmembrane segment at 578 to 598 (LLLFSLLCMPVAFLFGVITAI) threads the bilayer. The Cytoplasmic segment spans residues 599-602 (AHVK). A helical transmembrane segment spans residues 603 to 623 (WLLVTISIISGGFFLFAIFIL). Over 624 to 638 (GPHVMLQRSHLPPSS) the chain is Extracellular. A helical transmembrane segment spans residues 639 to 659 (GIFLKTFMLTIDISELFVILI). Residues 660–670 (KACFGCVACSE) are Cytoplasmic-facing.

As to quaternary structure, component of large complexes containing, at least, FLS2, HSP70 and ACD6 in endoplasmic reticulum, plasma membrane and soluble fraction. Associated with HSP70 proteins during endoplasmic reticulum-associated degradation (ERAD). Reduced complex levels upon benzothiazole (BTH) treatment. Post-translationally, ubiquitinated. Basal expression requires light and salicylic acid (SA).

It localises to the cell membrane. Its subcellular location is the endoplasmic reticulum membrane. In terms of biological role, dose-dependent activator of the defense response against virulent pathogens, including bacteria, fungi and oomycetes, that acts in a positive feedback loop with the defense signal salicylic acid (SA). Regulates the salicylic acid (SA) signaling pathway leading to cell death and modulating cell fate (e.g. cell enlargement and/or cell division). In response to SA signaling, triggers the accumulation of FLS2 at the plasma membrane, thus priming defenses. Involved in SA-dependent freezing signaling and tolerance. The chain is Protein ACCELERATED CELL DEATH 6 from Arabidopsis thaliana (Mouse-ear cress).